The sequence spans 1012 residues: MPLATTLGTLVLLLLLPLPRGAEVTGDHSNVALDYGALEGEEGTEQQLHYHDPCKAAVFWGDIALDEDDLKLFHIDKAEDWTKPSIDKPGHDTGGLEETSARWPNDTASNASIQAPRKDGKDATTFLPNPGTSNTTAKTFSARVRRATTSRTERIWPGGVIPYVIGGNFTGTQRAIFKQAMRHWEKHTCVTFVERTDEESFIVFSYRTCGCCSYVGRRGGGPQAISIGKNCDKFGIVAHELGHVVGFWHEHTRPDRDQHVTIIRENIQPGQEYNFLKMEAGEVSSLGETYDFDSIMHYARNTFSRGVFLDTILPRRDDNGVRPTIGQRVRLSQGDIAQARKLYKCPACGETLQDTTGNFSAPGFPNGYPSYSHCVWRISVTPGEKIILNFTSMDLFKSRLCWYDYVEIRDGYWRKAPLLGRFCGDKIPESLVSSDSRLWVEFRSSSSSLGKGFFAVYEAMCGGDITKDAGQIQSPNYPDDYRPSKECVWRITVPDGFHVGLTFQSFEIERHDSCAYDYLEIRDGPTEDSTLIGHFCGYEKPEAVKSSANRLWVKFVSDGSINKAGFAANFFKEVDECSWPDHGGCEQRCVNTLGSYTCACDPGYELAADKKTCEVACGGFITKLNGTITSPGWPKEYPTNKNCVWQVVAPVQYRISLQFEAFELEGNDVCKYDFVEVRSGLSPDAKLHGKFCGSETPEVITSQSNNMRVEFKSDNTVSKRGFRAHFFSDKDECAKDNGGCQQECVNTFGSYLCRCRNGYRLHENGHDCKEAGCAYKISSAEGTLMSPNWPDKYPSRKECTWNISSTAGHRVKITFSEFEIEQHQECAYDHLELYDGTDSLAPILGRFCGSKKPDPVVATGSSLFLRFYSDASVQRKGFQAVHSTECGGRLKAEVQTKELYSHAQFGDNNYPSQARCDWVIVAEDGYGVELIFRTFEVEEEADCGYDFMEAYDGYDSSAPRLGRFCGSGPLEEIYSAGDSLMIRFHTDDTINKKGFHARYTSTKFQDALHMRK.

The signal sequence occupies residues methionine 1–glycine 21. The propeptide occupies alanine 22 to arginine 146. A disordered region spans residues lysine 83–threonine 135. Residues phenylalanine 126 to threonine 135 are compositionally biased toward polar residues. The region spanning arginine 146–proline 346 is the Peptidase M12A domain. N-linked (GlcNAc...) asparagine glycosylation is present at asparagine 168. Intrachain disulfides connect cysteine 189–cysteine 345, cysteine 209–cysteine 231, cysteine 211–cysteine 212, and cysteine 348–cysteine 374. Histidine 239 contacts Zn(2+). Glutamate 240 is a catalytic residue. 2 residues coordinate Zn(2+): histidine 243 and histidine 249. CUB domains lie at cysteine 348 to methionine 460 and cysteine 461 to glutamate 573. Residues asparagine 358 and asparagine 389 are each glycosylated (N-linked (GlcNAc...) asparagine). Intrachain disulfides connect cysteine 401/cysteine 423, cysteine 461/cysteine 487, cysteine 514/cysteine 536, cysteine 577/cysteine 589, cysteine 585/cysteine 598, cysteine 600/cysteine 613, cysteine 617/cysteine 643, cysteine 670/cysteine 692, cysteine 733/cysteine 744, cysteine 740/cysteine 753, cysteine 755/cysteine 768, and cysteine 773/cysteine 799. The region spanning glutamate 573–glutamate 614 is the EGF-like 1; calcium-binding domain. A CUB 3 domain is found at cysteine 617–aspartate 729. Asparagine 625 carries N-linked (GlcNAc...) asparagine glycosylation. Residues aspartate 729 to lysine 769 form the EGF-like 2; calcium-binding domain. CUB domains lie at cysteine 773 to glutamate 885 and cysteine 886 to threonine 1002. N-linked (GlcNAc...) asparagine glycosylation occurs at asparagine 802. Disulfide bonds link cysteine 826-cysteine 848, cysteine 886-cysteine 916, and cysteine 943-cysteine 965. Arginine 960 and arginine 963 each carry omega-N-methylarginine.

The cofactor is Zn(2+).

The protein resides in the secreted. Its function is as follows. Protease which specifically processes pro-lysyl oxidase. Required for the embryonic development. Predominant protease, which in the development, influences dorsal-ventral patterning and skeletogenesis. The polypeptide is Tolloid-like protein 2 (Tll2) (Mus musculus (Mouse)).